The sequence spans 326 residues: DnaJ homolog subfamily B member 6 (326 aa).

The region spanning 2 to 69 is the J domain; sequence VDYYEVLGVQ…KKRDIYDKYG (68 aa). The segment at 2-146 is interaction with HSP70; it reads VDYYEVLGVQ…TGSFFSAFSG (145 aa). The interval 119-242 is interaction with KRT18; sequence FEDFFGNRRG…ADDDALAEER (124 aa). Arg-135 bears the Omega-N-methylarginine mark. Positions 249–326 are disordered; it reads ALPAQPAGLR…KKKKSTKGNH (78 aa). Residue Ser-277 is modified to Phosphoserine.

As to quaternary structure, homooligomer. Interacts with BAG3, HSPB8 and STUB1. Interacts with ALKBH1. Interacts with HSP70, KRT18 and PTTG.

It localises to the cytoplasm. It is found in the perinuclear region. Its subcellular location is the nucleus. The protein localises to the myofibril. The protein resides in the sarcomere. It localises to the z line. In terms of biological role, has a stimulatory effect on the ATPase activity of HSP70 in a dose-dependent and time-dependent manner and hence acts as a co-chaperone of HSP70. Plays an indispensable role in the organization of KRT8/KRT18 filaments. Acts as an endogenous molecular chaperone for neuronal proteins including huntingtin. Suppresses aggregation and toxicity of polyglutamine-containing, aggregation-prone proteins. Also reduces cellular toxicity and caspase-3 activity. In Pongo abelii (Sumatran orangutan), this protein is DnaJ homolog subfamily B member 6 (DNAJB6).